The primary structure comprises 264 residues: uncharacterized protein (264 aa).

Residues 1–22 (MKSIKRIGLCISLLILIIFVTS) form the signal peptide. Residue cysteine 23 is the site of N-palmitoyl cysteine attachment. Residue cysteine 23 is the site of S-diacylglycerol cysteine attachment.

It belongs to the staphylococcal tandem lipoprotein family.

It is found in the cell membrane. This is an uncharacterized protein from Staphylococcus aureus (strain MRSA252).